Reading from the N-terminus, the 235-residue chain is Ferric nitrobindin-like protein (235 aa).

The interval 1–59 is disordered; sequence MSDLASEGSDPAERASEHSNGNAPADRPARRSGDQAVADAAERAKATGSRNIPVLPDLP. Positions 85 to 91 match the GXWXGXG motif; the sequence is GVWRGEG.

It belongs to the nitrobindin family.

The sequence is that of Ferric nitrobindin-like protein from Nocardia farcinica (strain IFM 10152).